The sequence spans 436 residues: Probable sodium/metabolite cotransporter BASS4, chloroplastic (436 aa).

The transit peptide at 1-47 (MAIASTLASTQNPFLCLRQPPSPGNRSVVFRRCQDPCGRRWISRSIR) directs the protein to the chloroplast. The next 9 helical transmembrane spans lie at 109-129 (FLPL…TLGC), 131-151 (ADKY…SGLT), 157-177 (IGAA…ILLL), 195-215 (LVTG…GVAL), 225-245 (LALA…PFWV), 257-277 (FPTD…LIIG), 297-314 (LFSK…WIQV), 328-348 (VFLA…AFNA), and 403-423 (PCVA…NLWL).

It belongs to the bile acid:sodium symporter (BASS) (TC 2.A.28) family.

The protein resides in the membrane. The protein localises to the plastid. Its subcellular location is the chloroplast envelope. In terms of biological role, may function as sodium-coupled metabolite transporter across the chloroplast envelope. The polypeptide is Probable sodium/metabolite cotransporter BASS4, chloroplastic (BASS4) (Arabidopsis thaliana (Mouse-ear cress)).